The sequence spans 4085 residues: Replicase polyprotein 1a (4085 aa).

Residues 2-109 form the CoV Nsp1 globular domain; that stretch reads ACNRVTLAVA…EFDVVFGKRG (108 aa). In terms of domain architecture, CoV Nsp2 N-terminal spans 113-359; sequence VTYTDQYLCG…RNSVTDECRL (247 aa). Residues cysteine 246, cysteine 248, cysteine 265, and cysteine 266 each contribute to the Zn(2+) site. The segment at 246 to 266 is C4; the sequence is CTCGTKSWSVGDWTGFKSSCC. The region spanning 389–775 is the CoV Nsp2 middle domain; it reads YDDIFAESKP…LEAYNAFLDT (387 aa). The region spanning 773 to 897 is the CoV Nsp2 C-terminal domain; it reads LDTVVSTVKI…LPVAFTKAAG (125 aa). Positions 898–993 constitute a Ubiquitin-like 1 domain; sequence GKVSFSDDVE…VMISEWPLSV (96 aa). The 253-residue stretch at 1016-1268 folds into the Peptidase C16 1 domain; that stretch reads VNSIFDIETV…DTTPKEEFVV (253 aa). Catalysis depends on cysteine 1054, which acts as the For PL1-PRO activity. Residues 1126–1157 form a C4-type 1; degenerate zinc finger; that stretch reads CSCTSGRLEESGAVLFCTPTKKAFPYGTCLNC. Catalysis depends on for PL1-PRO activity residues histidine 1205 and aspartate 1218. Residues 1269–1436 form the Macro domain; the sequence is KEKLNAFLVH…KVKDFVSGLV (168 aa). The region spanning 1600–1655 is the Ubiquitin-like 2 domain; the sequence is AKVITIKVTEDGVNVHDVTVTTDKSFEQQVGVIADKDKDLSGAVPSDLNTSELLTK. The Peptidase C16 2 domain occupies 1663–1914; sequence EFYGFKDAVT…TVKPKPVINQ (252 aa). Cysteine 1701 (for PL2-PRO activity) is an active-site residue. Positions 1780, 1783, 1813, and 1815 each coordinate Zn(2+). The C4-type 2; atypical zinc finger occupies 1780–1815; that stretch reads CVECDAKFKNSVASINSAIVCASVKRDGVQVGYCVH. Active-site for PL2-PRO activity residues include histidine 1863 and aspartate 1868. The segment at 1925-2115 is HD1; sequence FGDFLIHNFV…STVGVFLGYK (191 aa). A helical transmembrane segment spans residues 1998-2018; the sequence is LLLLIYTLYSVVLLCVRFGPF. Residues 2005 to 2070 form the 3Ecto domain; sequence LYSVVLLCVR…LDVVWKHITD (66 aa). 2 disulfides stabilise this stretch: cysteine 2021–cysteine 2048 and cysteine 2039–cysteine 2045. Transmembrane regions (helical) follow at residues 2068 to 2088 and 2095 to 2115; these read ITDPLFSNMQPFIVMVLLLIF and CFLLYFVAQMISTVGVFLGYK. Residues 2144–2234 are Y1; that stretch reads SFVRHVLFGC…ITKTNVQPTG (91 aa). Residues 2144-2483 enclose the CoV Nsp3 Y domain; it reads SFVRHVLFGC…PATSIVAKQG (340 aa). Zn(2+) contacts are provided by histidine 2148, cysteine 2153, cysteine 2158, cysteine 2161, cysteine 2194, histidine 2197, cysteine 2201, and cysteine 2204. A ZF1 region spans residues 2148–2161; it reads HVLFGCENPDCIAC. The interval 2194–2204 is ZF2; the sequence is CKKHRFFCVDC. The segment at 2235-2324 is Y2; that stretch reads PAYVMIDKVE…LVDSELLSTL (90 aa). Residues 2235-2483 are coV-Y; sequence PAYVMIDKVE…PATSIVAKQG (249 aa). The interval 2325–2381 is Y3; it reads SVDFNGVLHKAYIDVLRNSFGKDLNANMSLAECKRALGLSISDHEFTSAISNAHRCD. The interval 2382 to 2483 is Y4; it reads VLLSDLSFNN…PATSIVAKQG (102 aa). Helical transmembrane passes span 2491–2511, 2731–2751, 2755–2775, 2782–2802, 2809–2829, and 2834–2854; these read LTWLWLLCGLVCLIQFYLCFF, LWNLVFNILSMFSSSFSVAAM, ILLNCALGAFAIFCCFLVTKF, LSVGVCTVVVAVLLNNVSYIV, MIAYAILYFFATRSLRYAWIW, and LIAYISFAPWWLCAWYFLAML. The interval 2491 to 2854 is HD2; sequence LTWLWLLCGL…LCAWYFLAML (364 aa). The Nsp4C domain maps to 2870 to 2965; it reads LFEGDKFVGT…PTVSYGSTLQ (96 aa). One can recognise a Peptidase C30 domain in the interval 2966–3267; the sequence is AGLRKMAQPS…VKQMFGVNLQ (302 aa). Active-site for 3CL-PRO activity residues include histidine 3006 and cysteine 3109. 7 helical membrane-spanning segments follow: residues 3281 to 3301, 3304 to 3324, 3328 to 3348, 3367 to 3387, 3401 to 3421, 3422 to 3442, and 3467 to 3487; these read FAGFFVMFWAELFVYTTTIWV, GFLTPFMILLVALSLCLTFVV, VLFLQVFLLPSIIVAAIQNCA, VMQMDIQGFVNIFICLFVALL, CTYLFSLIAVLYTALYSYDYV, SLLVMLLCAISNEWYIGAIIF, and LLFYMLLGFVSCMYYGLLYWI. The HD3 stretch occupies residues 3281–3487; that stretch reads FAGFFVMFWA…CMYYGLLYWI (207 aa). Residues 3547 to 3629 enclose the RdRp Nsp7 cofactor domain; sequence SKLTDLKCTN…SYFENDSILQ (83 aa). The RdRp Nsp8 cofactor domain occupies 3630 to 3824; sequence SVASSFVGMP…LTCERVVKLQ (195 aa). The Nsp9 ssRNA-binding domain occupies 3825–3933; it reads NNEIMPGKMK…GYIGATVRLQ (109 aa). The ExoN/MTase coactivator domain occupies 3934–4072; sequence AGKQTEFVSN…DRTAIQSFDN (139 aa). The Zn(2+) site is built by cysteine 4007, cysteine 4010, histidine 4016, cysteine 4023, cysteine 4049, cysteine 4052, cysteine 4060, and cysteine 4062. Zinc fingers lie at residues 4007–4023 and 4049–4062; these read CIYCRAHVAHPTMDGFC and CKVCGCWLNHGCTC.

Belongs to the coronaviruses polyprotein 1ab family. As to quaternary structure, 3CL-PRO exists as monomer and homodimer. Eight copies of nsp7 and eight copies of nsp8 assemble to form a heterohexadecamer. Nsp9 is a dimer. Nsp10 forms a dodecamer. Specific enzymatic cleavages in vivo by its own proteases yield mature proteins. 3CL-PRO and PL-PRO proteinases are autocatalytically processed.

It is found in the host membrane. The protein resides in the host cytoplasm. Its subcellular location is the host perinuclear region. It catalyses the reaction Thiol-dependent hydrolysis of ester, thioester, amide, peptide and isopeptide bonds formed by the C-terminal Gly of ubiquitin (a 76-residue protein attached to proteins as an intracellular targeting signal).. The papain-like proteinase 1 (PLP1) and papain-like proteinase 2 (PLP2) are responsible for the cleavages located at the N-terminus of the replicase polyprotein. In addition, PLP2 possesses a deubiquitinating/deISGylating activity and processes both 'Lys-48'- and 'Lys-63'-linked polyubiquitin chains from cellular substrates. PLP2 also antagonizes innate immune induction of type I interferon by blocking the nuclear translocation of host IRF-3. Its function is as follows. Responsible for the majority of cleavages as it cleaves the C-terminus of replicase polyprotein at 11 sites. Recognizes substrates containing the core sequence [ILMVF]-Q-|-[SGACN]. Inhibited by the substrate-analog Cbz-Val-Asn-Ser-Thr-Leu-Gln-CMK. Also contains an ADP-ribose-1''-phosphate (ADRP)-binding function. Functionally, nsp7-nsp8 hexadecamer may possibly confer processivity to the polymerase, maybe by binding to dsRNA or by producing primers utilized by the latter. In terms of biological role, nsp9 is a ssRNA-binding protein. The sequence is that of Replicase polyprotein 1a from Homo sapiens (Human).